A 233-amino-acid chain; its full sequence is Glucosamine-6-phosphate deaminase (233 aa).

Aspartate 62 serves as the catalytic Proton acceptor; for enolization step. Asparagine 128 serves as the catalytic For ring-opening step. Histidine 130 (proton acceptor; for ring-opening step) is an active-site residue. Catalysis depends on glutamate 135, which acts as the For ring-opening step.

Belongs to the glucosamine/galactosamine-6-phosphate isomerase family. NagB subfamily.

It catalyses the reaction alpha-D-glucosamine 6-phosphate + H2O = beta-D-fructose 6-phosphate + NH4(+). It participates in amino-sugar metabolism; N-acetylneuraminate degradation; D-fructose 6-phosphate from N-acetylneuraminate: step 5/5. Catalyzes the reversible isomerization-deamination of glucosamine 6-phosphate (GlcN6P) to form fructose 6-phosphate (Fru6P) and ammonium ion. In Streptococcus pneumoniae serotype 4 (strain ATCC BAA-334 / TIGR4), this protein is Glucosamine-6-phosphate deaminase.